The sequence spans 502 residues: L-ornithine N(5)-monooxygenase (502 aa).

A compositionally biased stretch (basic and acidic residues) spans 1–10; the sequence is MEPVERKLEI. The interval 1 to 34 is disordered; the sequence is MEPVERKLEIGSRSYSKMPLTQQRSSGEPPRLKA. Residues 13 to 26 are compositionally biased toward polar residues; that stretch reads RSYSKMPLTQQRSS. FAD is bound by residues 83 to 91 and Gln102; that span reads ERQKQFAWH. Lys107 lines the substrate pocket. An FAD-binding site is contributed by Val168. NADP(+)-binding positions include 254 to 257 and Arg279; that span reads SGQS. Substrate contacts are provided by residues 293 to 296 and Asn323; that span reads NEVF. 323 to 325 contacts NADP(+); the sequence is NYS. 466-468 is a binding site for FAD; that stretch reads SLL. Substrate is bound at residue Ser469.

The protein belongs to the lysine N(6)-hydroxylase/L-ornithine N(5)-oxygenase family. In terms of assembly, homotetramer. The cofactor is FAD.

The catalysed reaction is L-ornithine + NADPH + O2 = N(5)-hydroxy-L-ornithine + NADP(+) + H2O. It catalyses the reaction L-ornithine + NADH + O2 = N(5)-hydroxy-L-ornithine + NAD(+) + H2O. Its pathway is siderophore biosynthesis. Functionally, catalyzes the conversion of L-ornithine to N(5)-hydroxyornithine, the first step in the biosynthesis of all hydroxamate-containing siderophores, such as deferriferrichrysin. In Aspergillus oryzae (strain ATCC 42149 / RIB 40) (Yellow koji mold), this protein is L-ornithine N(5)-monooxygenase.